A 249-amino-acid chain; its full sequence is Carboxy-S-adenosyl-L-methionine synthase (249 aa).

Residues Tyr39, 64–66 (GCS), 117–118 (DI), Asn132, and Arg199 contribute to the S-adenosyl-L-methionine site.

It belongs to the class I-like SAM-binding methyltransferase superfamily. Cx-SAM synthase family. In terms of assembly, homodimer.

The catalysed reaction is prephenate + S-adenosyl-L-methionine = carboxy-S-adenosyl-L-methionine + 3-phenylpyruvate + H2O. Functionally, catalyzes the conversion of S-adenosyl-L-methionine (SAM) to carboxy-S-adenosyl-L-methionine (Cx-SAM). The sequence is that of Carboxy-S-adenosyl-L-methionine synthase from Aeromonas hydrophila subsp. hydrophila (strain ATCC 7966 / DSM 30187 / BCRC 13018 / CCUG 14551 / JCM 1027 / KCTC 2358 / NCIMB 9240 / NCTC 8049).